The primary structure comprises 105 residues: Hydrogen cyanide synthase subunit HcnA (105 aa).

One can recognise a 2Fe-2S ferredoxin-type domain in the interval A16 to R97. Residues C60, C65, C68, and C81 each contribute to the [2Fe-2S] cluster site.

In terms of assembly, heterotrimer of HcnA, HcnB and HcnC.

It is found in the cell membrane. It catalyses the reaction glycine + 2 A = hydrogen cyanide + 2 AH2 + CO2. In terms of biological role, a three-component membrane-bound flavoenzyme that catalyzes the formation of hydrogen cyanide, a secondary metabolite, by transfer of electrons to a cyanide-resistant branch of the aerobic respiratory chain. Contributes to suppression of black root rot of tobacco. The polypeptide is Hydrogen cyanide synthase subunit HcnA (Pseudomonas protegens (strain DSM 19095 / LMG 27888 / CFBP 6595 / CHA0)).